The primary structure comprises 382 residues: DNA replication and repair protein RecF (382 aa).

30–37 (GPNGHGKS) contacts ATP.

It belongs to the RecF family.

It is found in the cytoplasm. Its function is as follows. The RecF protein is involved in DNA metabolism; it is required for DNA replication and normal SOS inducibility. RecF binds preferentially to single-stranded, linear DNA. It also seems to bind ATP. This Magnetococcus marinus (strain ATCC BAA-1437 / JCM 17883 / MC-1) protein is DNA replication and repair protein RecF.